A 343-amino-acid polypeptide reads, in one-letter code: Phenylalanine--tRNA ligase alpha subunit (343 aa).

Glu-264 contacts Mg(2+).

It belongs to the class-II aminoacyl-tRNA synthetase family. Phe-tRNA synthetase alpha subunit type 1 subfamily. In terms of assembly, tetramer of two alpha and two beta subunits. Mg(2+) serves as cofactor.

It is found in the cytoplasm. It carries out the reaction tRNA(Phe) + L-phenylalanine + ATP = L-phenylalanyl-tRNA(Phe) + AMP + diphosphate + H(+). The polypeptide is Phenylalanine--tRNA ligase alpha subunit (Aromatoleum aromaticum (strain DSM 19018 / LMG 30748 / EbN1) (Azoarcus sp. (strain EbN1))).